The sequence spans 716 residues: MEDSTSPKQEKENQEELGETRRPWEGKTAASPQYSEPESSEPLEAKQGPETGRQSRSSRPWSPQSRAKTPLGGPAGPETSSPAPVSPREPSSSPSPLAPARQDLAAPPQSDRTTSVIPEAGTPYPDPLEQSSDKRESTPHHTSQSEGNTFQQSQQPKPHLCGRRDVSYNNAKQKELRFDVFQEEDSNSDYDLQQPAPGGSEVAPSMLEITIQNAKAYLLKTSSNSGFNLYDHLSNMLTKILNERPENAVDIFENISQDVKMAHFSKKFDALQNENELLPTYEIAEKQKALFLQGHLEGVDQELEDEIAENALPNVMESAFYFEQAGVGLGTDETYRIFLALKQLTDTHPIQRCRFWGKILGLEMNYIVAEVEFREGEDEEEVEEEDVAEERDNGESEAHEDEEDELPKSFYKAPQAIPKEESRTGANKYVYFVCNEPGRPWVKLPPVIPAQIVIARKIKKFFTGRLDAPIISYPPFPGNESNYLRAQIARISAGTHVSPLGFYQFGEEEGEEEEEAEGGRNSFEENPDFEGIQVIDLVESLSNWVHHVQHILSQGRCNWFNSIQKNEEEEEEEDEEKDDSDYIEQEVGLPLLTPISEDLEIQNIPPWTTRLSSNLIPQYAIAVLQSNLWPGAYAFSNGKKFENFYIGWGHKYSPDNYTPPVPPPVYQEYPSGPEITEMDDPSVEEEQAFRAAQEAVLLAAENEESEEDEDEEDDYD.

Disordered stretches follow at residues 1–164 (MEDS…CGRR), 375–410 (EGED…PKSF), 506–526 (GEEE…FEEN), and 697–716 (LLAA…DDYD). A compositionally biased stretch (basic and acidic residues) spans 8 to 25 (KQEKENQEELGETRRPWE). Composition is skewed to low complexity over residues 29–42 (AASP…SSEP), 54–66 (QSRS…PQSR), and 80–100 (SSPA…LAPA). Residues 140–156 (HHTSQSEGNTFQQSQQP) are compositionally biased toward polar residues. The segment covering 375–389 (EGEDEEEVEEEDVAE) has biased composition (acidic residues). Ser-396 is modified (phosphoserine). Composition is skewed to acidic residues over residues 506–516 (GEEEGEEEEEA) and 701–716 (ENEE…DDYD).

This sequence belongs to the flagellar radial spoke RSP4/6 family. In terms of assembly, interacts with RSPH6A. In terms of tissue distribution, expressed in trachea, lungs, and testes. Very strong expression is detected in nasal brushings.

It localises to the cytoplasm. The protein resides in the cytoskeleton. It is found in the cilium axoneme. Its subcellular location is the cell projection. The protein localises to the cilium. In terms of biological role, component of the axonemal radial spoke head which plays an important role in ciliary motility. Essential for triplet radial spokes (RS1, RS2 and RS3) head assembly in the motile cilia. The sequence is that of Radial spoke head protein 4 homolog A (RSPH4A) from Homo sapiens (Human).